A 338-amino-acid chain; its full sequence is Putative clathrin assembly protein At5g10410 (338 aa).

The ENTH domain maps to 27–157; it reads FGSTAVKYIH…WVPKVLGSFP (131 aa).

Its subcellular location is the membrane. The protein localises to the clathrin-coated pit. It localises to the golgi apparatus. The protein resides in the cytoplasmic vesicle. It is found in the clathrin-coated vesicle. The polypeptide is Putative clathrin assembly protein At5g10410 (Arabidopsis thaliana (Mouse-ear cress)).